Consider the following 788-residue polypeptide: Protein translocase subunit SecA 2 (788 aa).

Residues Gln-86, 104-108 (GEGKT), and Asp-493 contribute to the ATP site.

This sequence belongs to the SecA family. In terms of assembly, monomer and homodimer. Part of the essential Sec protein translocation apparatus which comprises SecA, SecYEG and auxiliary proteins SecDF. Other proteins may also be involved.

It localises to the cell membrane. The protein resides in the cytoplasm. The enzyme catalyses ATP + H2O + cellular proteinSide 1 = ADP + phosphate + cellular proteinSide 2.. Functionally, part of the Sec protein translocase complex. Interacts with the SecYEG preprotein conducting channel. Has a central role in coupling the hydrolysis of ATP to the transfer of proteins into and across the cell membrane, serving as an ATP-driven molecular motor driving the stepwise translocation of polypeptide chains across the membrane. This is Protein translocase subunit SecA 2 from Bacillus anthracis.